We begin with the raw amino-acid sequence, 348 residues long: UDP-3-O-acylglucosamine N-acyltransferase (348 aa).

His237 (proton acceptor) is an active-site residue.

It belongs to the transferase hexapeptide repeat family. LpxD subfamily. Homotrimer.

The catalysed reaction is a UDP-3-O-[(3R)-3-hydroxyacyl]-alpha-D-glucosamine + a (3R)-hydroxyacyl-[ACP] = a UDP-2-N,3-O-bis[(3R)-3-hydroxyacyl]-alpha-D-glucosamine + holo-[ACP] + H(+). It functions in the pathway bacterial outer membrane biogenesis; LPS lipid A biosynthesis. Catalyzes the N-acylation of UDP-3-O-acylglucosamine using 3-hydroxyacyl-ACP as the acyl donor. Is involved in the biosynthesis of lipid A, a phosphorylated glycolipid that anchors the lipopolysaccharide to the outer membrane of the cell. The sequence is that of UDP-3-O-acylglucosamine N-acyltransferase from Geotalea daltonii (strain DSM 22248 / JCM 15807 / FRC-32) (Geobacter daltonii).